Reading from the N-terminus, the 100-residue chain is MIPLQHGLILAAILFVLGLTGLLVRRNLLFMLISLEVMINAAALAFIVAGSYWGQPDGQVMYILAISLAAAEASIGLALLLQLYRRRHTLNIDTVSEMRG.

The next 3 helical transmembrane spans lie at 4–24 (LQHG…GLLV), 28–48 (LLFM…AFIV), and 60–80 (VMYI…LALL).

The protein belongs to the complex I subunit 4L family. In terms of assembly, NDH-1 is composed of 13 different subunits. Subunits NuoA, H, J, K, L, M, N constitute the membrane sector of the complex.

Its subcellular location is the cell inner membrane. It carries out the reaction a quinone + NADH + 5 H(+)(in) = a quinol + NAD(+) + 4 H(+)(out). Its function is as follows. NDH-1 shuttles electrons from NADH, via FMN and iron-sulfur (Fe-S) centers, to quinones in the respiratory chain. The immediate electron acceptor for the enzyme in this species is believed to be ubiquinone. Couples the redox reaction to proton translocation (for every two electrons transferred, four hydrogen ions are translocated across the cytoplasmic membrane), and thus conserves the redox energy in a proton gradient. This chain is NADH-quinone oxidoreductase subunit K, found in Serratia proteamaculans (strain 568).